The following is a 311-amino-acid chain: Olfactory receptor 10G4 (311 aa).

The Extracellular segment spans residues 1-23 (MSNASLVTAFILTGLPHAPGLDA). N3 carries N-linked (GlcNAc...) asparagine glycosylation. A helical transmembrane segment spans residues 24–44 (LLFGIFLVVYVLTVLGNLLIL). At 45-52 (LVIRVDSH) the chain is on the cytoplasmic side. A helical membrane pass occupies residues 53-73 (LHTPMYYFLTNLSFIDMWFST). At 74-98 (VTVPKMLMTLVSPSGRAISFHSCVA) the chain is on the extracellular side. C96 and C188 are disulfide-bonded. The chain crosses the membrane as a helical span at residues 99–119 (QLYFFHFLGSTECFLYTVMSY). Topologically, residues 120–138 (DRYLAISYPLRYTSMMSGS) are cytoplasmic. The helical transmembrane segment at 139–159 (RCALLATGTWLSGSLHSAVQT) threads the bilayer. Over 160–196 (ILTFHLPYCGPNQIQHYFCDAPPILKLACADTSANVM) the chain is Extracellular. Residues 197–216 (VIFVDIGIVASGCFVLIVLS) form a helical membrane-spanning segment. The Cytoplasmic portion of the chain corresponds to 217-236 (YVSIVCSILRIRTSDGRRRA). A helical membrane pass occupies residues 237-257 (FQTCASHCIVVLCFFVPCVVI). Residues 258 to 268 (YLRPGSMDAMD) are Extracellular-facing. The chain crosses the membrane as a helical span at residues 269–289 (GVVAIFYTVLTPLLNPVVYTL). The Cytoplasmic portion of the chain corresponds to 290 to 311 (RNKEVKKAVLKLRDKVAHPQRK).

The protein belongs to the G-protein coupled receptor 1 family.

It localises to the cell membrane. In terms of biological role, odorant receptor. The polypeptide is Olfactory receptor 10G4 (OR10G4) (Homo sapiens (Human)).